The chain runs to 123 residues: Large ribosomal subunit protein mL52 (123 aa).

Residues 1–23 constitute a mitochondrion transit peptide; it reads MAALGTVLFTGVRRLHCSVAAWA. Basic and acidic residues predominate over residues 99-109; the sequence is QEEQRKQENAL. The tract at residues 99–123 is disordered; that stretch reads QEEQRKQENALKPKGASLKSPLPSQ.

This sequence belongs to the mitochondrion-specific ribosomal protein mL52 family. Component of the mitochondrial large ribosomal subunit (mt-LSU). Mature mammalian 55S mitochondrial ribosomes consist of a small (28S) and a large (39S) subunit. The 28S small subunit contains a 12S ribosomal RNA (12S mt-rRNA) and 30 different proteins. The 39S large subunit contains a 16S rRNA (16S mt-rRNA), a copy of mitochondrial valine transfer RNA (mt-tRNA(Val)), which plays an integral structural role, and 52 different proteins. mL52 connects the central protuberance to the body of the ribosome.

Its subcellular location is the mitochondrion. The protein is Large ribosomal subunit protein mL52 (MRPL52) of Homo sapiens (Human).